The following is a 246-amino-acid chain: uncharacterized protein (246 aa).

Helical transmembrane passes span 7–27 (KVTL…ALII), 50–70 (LNIL…SMEF), 99–119 (VSFY…LLFF), 135–155 (LALI…GLLC), 163–183 (AVAV…VQLM), and 219–239 (FSIG…WWCF).

Its subcellular location is the cell membrane. This is an uncharacterized protein from Bacillus subtilis (strain 168).